The sequence spans 347 residues: NADH-ubiquinone oxidoreductase chain 2 (347 aa).

11 helical membrane passes run 1 to 21, 25 to 45, 55 to 75, 96 to 116, 123 to 143, 145 to 165, 178 to 198, 200 to 220, 237 to 257, 274 to 294, and 324 to 344; these read MNPL…LITA, HWFL…PVLT, AAIK…MAIL, TMML…FWVP, TLMS…SIMY, IFPV…IMVG, ILAY…PYNP, ITIF…LALN, LTWL…LPPL, GTLI…YFYM, and FLLP…PLTF.

This sequence belongs to the complex I subunit 2 family. In terms of assembly, core subunit of respiratory chain NADH dehydrogenase (Complex I) which is composed of 45 different subunits. Interacts with TMEM242.

The protein resides in the mitochondrion inner membrane. The catalysed reaction is a ubiquinone + NADH + 5 H(+)(in) = a ubiquinol + NAD(+) + 4 H(+)(out). Core subunit of the mitochondrial membrane respiratory chain NADH dehydrogenase (Complex I) which catalyzes electron transfer from NADH through the respiratory chain, using ubiquinone as an electron acceptor. Essential for the catalytic activity and assembly of complex I. The sequence is that of NADH-ubiquinone oxidoreductase chain 2 from Hylobates lar (Lar gibbon).